Reading from the N-terminus, the 379-residue chain is ATP phosphoribosyltransferase regulatory subunit (379 aa).

Belongs to the class-II aminoacyl-tRNA synthetase family. HisZ subfamily. In terms of assembly, heteromultimer composed of HisG and HisZ subunits.

The protein localises to the cytoplasm. The protein operates within amino-acid biosynthesis; L-histidine biosynthesis; L-histidine from 5-phospho-alpha-D-ribose 1-diphosphate: step 1/9. Required for the first step of histidine biosynthesis. May allow the feedback regulation of ATP phosphoribosyltransferase activity by histidine. The sequence is that of ATP phosphoribosyltransferase regulatory subunit from Paramagnetospirillum magneticum (strain ATCC 700264 / AMB-1) (Magnetospirillum magneticum).